Consider the following 356-residue polypeptide: Tyrosine recombinase XerS (356 aa).

The Core-binding (CB) domain occupies 16 to 121; sequence IMPSYVLEYY…ALSSLYKYLT (106 aa). The 186-residue stretch at 169–354 folds into the Tyr recombinase domain; sequence GFLDYIDNEY…INEEQKNALD (186 aa). Active-site residues include R210, K234, H306, R309, and H332. Residue Y341 is the O-(3'-phospho-DNA)-tyrosine intermediate of the active site.

It belongs to the 'phage' integrase family. XerS subfamily.

It localises to the cytoplasm. FtsK is required for recombination. Its function is as follows. Site-specific tyrosine recombinase, which acts by catalyzing the cutting and rejoining of the recombining DNA molecules. Essential to convert dimers of the bacterial chromosome into monomers to permit their segregation at cell division. This chain is Tyrosine recombinase XerS, found in Lactococcus lactis subsp. lactis (strain IL1403) (Streptococcus lactis).